The primary structure comprises 108 residues: N(4)-acetylcytidine amidohydrolase (108 aa).

An ASCH domain is found at 5–102; it reads ITFFQRLERS…NDLFFISFRV (98 aa). Lys-20 (proton acceptor) is an active-site residue. Residue Thr-23 is the Nucleophile of the active site. The active-site Proton donor is Glu-73.

Belongs to the N(4)-acetylcytidine amidohydrolase family.

The enzyme catalyses N(4)-acetylcytidine + H2O = cytidine + acetate + H(+). It catalyses the reaction N(4)-acetyl-2'-deoxycytidine + H2O = 2'-deoxycytidine + acetate + H(+). It carries out the reaction N(4)-acetylcytosine + H2O = cytosine + acetate + H(+). Functionally, catalyzes the hydrolysis of N(4)-acetylcytidine (ac4C). This is N(4)-acetylcytidine amidohydrolase from Moritella marina (Vibrio marinus).